Reading from the N-terminus, the 411-residue chain is RING-H2 finger protein ATL65 (411 aa).

Residues 1 to 32 (MRFVAPPPRSGDNSPSPSPSSGISEEILSRSS) are disordered. Positions 10–21 (SGDNSPSPSPSS) are enriched in low complexity. The chain crosses the membrane as a helical span at residues 36 to 56 (LEFSPPLIAMVVVLAAAFLFV). The RING-type; atypical zinc-finger motif lies at 156–198 (CAVCLLEFEEGDYVRTLPLCFHAFHLECIDEWLRSHPNCPLCR).

This sequence belongs to the RING-type zinc finger family. ATL subfamily.

It is found in the membrane. It carries out the reaction S-ubiquitinyl-[E2 ubiquitin-conjugating enzyme]-L-cysteine + [acceptor protein]-L-lysine = [E2 ubiquitin-conjugating enzyme]-L-cysteine + N(6)-ubiquitinyl-[acceptor protein]-L-lysine.. The protein operates within protein modification; protein ubiquitination. The protein is RING-H2 finger protein ATL65 (ATL65) of Arabidopsis thaliana (Mouse-ear cress).